A 353-amino-acid polypeptide reads, in one-letter code: Interferon-stimulated 20 kDa exonuclease-like 2 (353 aa).

Disordered stretches follow at residues 1–93 (MSTL…QPLD) and 125–172 (ALPK…SGAS). The span at 14–23 (PPKKALEGNA) shows a compositional bias: basic and acidic residues. The segment covering 24-35 (KHRNFVKKRRLL) has biased composition (basic residues). The span at 54 to 63 (LHSEPSKKGE) shows a compositional bias: basic and acidic residues. The span at 135 to 151 (RSQKKSSQKKSSKKNHP) shows a compositional bias: basic residues. The segment covering 152–172 (QKNAPQNSTQAHSENKCSGAS) has biased composition (polar residues). The region spanning 178–353 (KMVAIDCEMV…EHLARNPPTD (176 aa)) is the Exonuclease domain.

The protein resides in the nucleus. The protein localises to the nucleolus. Its function is as follows. 3'-&gt; 5'-exoribonuclease involved in ribosome biogenesis in the processing of the 12S pre-rRNA. Displays a strong specificity for a 3'-end containing a free hydroxyl group. This Homo sapiens (Human) protein is Interferon-stimulated 20 kDa exonuclease-like 2 (ISG20L2).